The following is a 77-amino-acid chain: Acyl carrier protein (77 aa).

Residues 4–77 (SETFEKVKKI…TVQAAVDXIN (74 aa)) form the Carrier domain. Ser-40 is modified (O-(pantetheine 4'-phosphoryl)serine).

It belongs to the acyl carrier protein (ACP) family. 4'-phosphopantetheine is transferred from CoA to a specific serine of apo-ACP by AcpS. This modification is essential for activity because fatty acids are bound in thioester linkage to the sulfhydryl of the prosthetic group.

The protein localises to the cytoplasm. It participates in lipid metabolism; fatty acid biosynthesis. Its function is as follows. Carrier of the growing fatty acid chain in fatty acid biosynthesis. This is Acyl carrier protein from Anabaena variabilis.